The chain runs to 95 residues: Endoribonuclease VapD homolog (95 aa).

It belongs to the VapD ribonuclease family. As to quaternary structure, homodimer.

Cleaves ssRNA, mostly between U:A. The sequence is that of Endoribonuclease VapD homolog from Helicobacter pylori (strain ATCC 700392 / 26695) (Campylobacter pylori).